We begin with the raw amino-acid sequence, 1017 residues long: MVFSVRQCGHVGRTEEVLLTFKIFLVIICLHVVLVTSLEEDTDNSSLSPPPAKLSVVSFAPSSNGTPEVETTSLNDVTLSLLPSNETEKTKITIVKTFNASGVKPQRNICNLSSICNDSAFFRGEIMFQYDKESTVPQNQHITNGTLTGVLSLSELKRSELNKTLQTLSETYFIMCATAEAQSTLNCTFTIKLNNTMNACAVIAALERVKIRPMEHCCCSVRIPCPSSPEELEKLQCDLQDPIVCLADHPRGPPFSSSQSIPVVPRATVLSQVPKATSFAEPPDYSPVTHNVPSPIGEIQPLSPQPSAPIASSPAIDMPPQSETISSPMPQTHVSGTPPPVKASFSSPTVSAPANVNTTSAPPVQTDIVNTSSISDLENQVLQMEKALSLGSLEPNLAGEMINQVSRLLHSPPDMLAPLAQRLLKVVDDIGLQLNFSNTTISLTSPSLALAVIRVNASSFNTTTFVAQDPANLQVSLETQAPENSIGTITLPSSLMNNLPAHDMELASRVQFNFFETPALFQDPSLENLSLISYVISSSVANLTVRNLTRNVTVTLKHINPSQDELTVRCVFWDLGRNGGRGGWSDNGCSVKDRRLNETICTCSHLTSFGVLLDLSRTSVLPAQMMALTFITYIGCGLSSIFLSVTLVTYIAFEKIRRDYPSKILIQLCAALLLLNLVFLLDSWIALYKMQGLCISVAVFLHYFLLVSFTWMGLEAFHMYLALVKVFNTYIRKYILKFCIVGWGVPAVVVTIILTISPDNYGLGSYGKFPNGSPDDFCWINNNAVFYITVVGYFCVIFLLNVSMFIVVLVQLCRIKKKKQLGAQRKTSIQDLRSIAGLTFLLGITWGFAFFAWGPVNVTFMYLFAIFNTLQGFFIFIFYCVAKENVRKQWRRYLCCGKLRLAENSDWSKTATNGLKKQTVNQGVSSSSNSLQSSSNSTNSTTLLVNNDCSVHASGNGNASTERNGVSFSVQNGDVCLHDFTGKQHMFNEKEDSCNGKGRMALRRTSKRGSLHFIEQM.

Residues 1-37 (MVFSVRQCGHVGRTEEVLLTFKIFLVIICLHVVLVTS) form the signal peptide. At 38 to 627 (LEEDTDNSSL…TSVLPAQMMA (590 aa)) the chain is on the extracellular side. 9 N-linked (GlcNAc...) asparagine glycosylation sites follow: N44, N85, N99, N111, N117, N144, N162, N186, and N194. The interval 301 to 366 (PLSPQPSAPI…NTTSAPPVQT (66 aa)) is disordered. Positions 308–320 (APIASSPAIDMPP) are enriched in low complexity. Polar residues-rich tracts occupy residues 321 to 335 (QSETISSPMPQTHVS) and 344 to 366 (SFSSPTVSAPANVNTTSAPPVQT). N-linked (GlcNAc...) asparagine glycans are attached at residues N357, N370, N435, N438, N456, N461, N528, N542, N547, N551, and N597. The 158-residue stretch at 462–619 (TTTFVAQDPA…GVLLDLSRTS (158 aa)) folds into the GAIN-B domain. Cystine bridges form between C570–C601 and C589–C603. Residues 570–619 (CVFWDLGRNGGRGGWSDNGCSVKDRRLNETICTCSHLTSFGVLLDLSRTS) form a GPS region. Positions 608-619 (SFGVLLDLSRTS) are stachel. A helical transmembrane segment spans residues 628 to 648 (LTFITYIGCGLSSIFLSVTLV). Over 649-667 (TYIAFEKIRRDYPSKILIQ) the chain is Cytoplasmic. The helical transmembrane segment at 668–688 (LCAALLLLNLVFLLDSWIALY) threads the bilayer. The Extracellular portion of the chain corresponds to 689 to 693 (KMQGL). A helical transmembrane segment spans residues 694-714 (CISVAVFLHYFLLVSFTWMGL). C694 and C778 form a disulfide bridge. Residues 715–737 (EAFHMYLALVKVFNTYIRKYILK) lie on the Cytoplasmic side of the membrane. The chain crosses the membrane as a helical span at residues 738–758 (FCIVGWGVPAVVVTIILTISP). Residues 759–789 (DNYGLGSYGKFPNGSPDDFCWINNNAVFYIT) lie on the Extracellular side of the membrane. A helical membrane pass occupies residues 790 to 810 (VVGYFCVIFLLNVSMFIVVLV). Topologically, residues 811 to 834 (QLCRIKKKKQLGAQRKTSIQDLRS) are cytoplasmic. Residues 835-855 (IAGLTFLLGITWGFAFFAWGP) traverse the membrane as a helical segment. The Extracellular segment spans residues 856-857 (VN). A glycan (N-linked (GlcNAc...) asparagine) is linked at N857. Residues 858–878 (VTFMYLFAIFNTLQGFFIFIF) traverse the membrane as a helical segment. N868 is a 3beta-hydroxyandrost-5-en-17-one binding site. Residues 879–1017 (YCVAKENVRK…RGSLHFIEQM (139 aa)) lie on the Cytoplasmic side of the membrane. The tract at residues 918-939 (QTVNQGVSSSSNSLQSSSNSTN) is disordered. The residue at position 1010 (S1010) is a Phosphoserine.

Belongs to the G-protein coupled receptor 2 family. Adhesion G-protein coupled receptor (ADGR) subfamily. As to quaternary structure, heterodimer of 2 chains generated by proteolytic processing; the large extracellular N-terminal fragment and the membrane-bound C-terminal fragment predominantly remain associated and non-covalently linked. Interacts with CFTR. Proteolytically cleaved into 2 subunits, an extracellular subunit and a seven-transmembrane subunit. In terms of processing, highly glycosylated. Epididymis-specific expression (at protein level). Both subunits are associated with apical membranes of efferent ductule and proximal epididymal duct epithelia. Mainly expressed in the nonciliated principal cells of the proximal excurrent ducts. Specifically over-expressed in Ewing sarcomas but also up-regulated in a number of carcinomas derived from prostate, kidney or lung.

It localises to the apical cell membrane. Forms a heterodimer of 2 chains generated by proteolytic processing that remain associated through non-covalent interactions mediated by the GAIN-B domain. In the inactivated receptor, the Stachel sequence (also named stalk) is embedded in the GAIN-B domain, where it adopts a beta-strand conformation. On activation, the Stachel moves into the 7 transmembrane region and adopts a twisted hook-shaped configuration that forms contacts within the receptor, leading to coupling of a G-alpha protein, which activates signaling. The cleaved GAIN-B and N-terminal domains can then dissociate from the rest of the receptor. Deoxycorticosterone (DOC) acts as an antagonist of ADGRG2. Adhesion G-protein coupled receptor (aGPCR) for steroid hormones, such as dehydroepiandrosterone (DHEA; also named 3beta-hydroxyandrost-5-en-17-one) and androstenedione. Involved in a signal transduction pathway controlling epididymal function and male fertility. Ligand binding causes a conformation change that triggers signaling via guanine nucleotide-binding proteins (G proteins) and modulates the activity of downstream effectors, such as adenylate cyclase. ADGRG2 is coupled to G(s) G proteins and mediates activation of adenylate cyclase activity. Also able to couple with G(q) G proteins in vitro. Together with CFTR, required to promote fluid reabsorption within efferent ductule. This Homo sapiens (Human) protein is Adhesion G-protein coupled receptor G2.